A 109-amino-acid chain; its full sequence is Large ribosomal subunit protein uL24 (109 aa).

The protein belongs to the universal ribosomal protein uL24 family. In terms of assembly, part of the 50S ribosomal subunit.

In terms of biological role, one of two assembly initiator proteins, it binds directly to the 5'-end of the 23S rRNA, where it nucleates assembly of the 50S subunit. Its function is as follows. One of the proteins that surrounds the polypeptide exit tunnel on the outside of the subunit. The sequence is that of Large ribosomal subunit protein uL24 from Syntrophobacter fumaroxidans (strain DSM 10017 / MPOB).